The chain runs to 491 residues: NADH-ubiquinone oxidoreductase chain 4 (491 aa).

14 helical membrane passes run 2–22, 37–57, 89–109, 114–134, 139–159, 169–189, 215–235, 245–265, 271–291, 308–328, 332–352, 372–392, 412–432, and 457–477; these read IFHKNWLGLIFLLLFLGIINV, ALEWSLATLTATLILWAAFDM, ISLFFLILTALLTPICILISW, FLLKEFLLCLLFLEVLLMGVF, LLLFYILFEGILIPMFLLIGV, ASYYFFFYTFVGSVFMLLGIF, WIFAGFFLSLAVKIPQVPFHI, PVSGSVILAGILLKLGGYGFL, ILPAATEYFAPFVIMLSVIAI, IAYSSVAHMGLVTLGLFTHTI, VAAVFMMLAHGLVSSALFIAV, FSMPIFVSVFLVLTLTNMAIP, IVIGVLAATGMVWSAAYSLYL, and IAISPLVILIFILGVLPSLII.

The protein belongs to the complex I subunit 4 family.

The protein resides in the mitochondrion membrane. It carries out the reaction a ubiquinone + NADH + 5 H(+)(in) = a ubiquinol + NAD(+) + 4 H(+)(out). Functionally, core subunit of the mitochondrial membrane respiratory chain NADH dehydrogenase (Complex I) that is believed to belong to the minimal assembly required for catalysis. Complex I functions in the transfer of electrons from NADH to the respiratory chain. The immediate electron acceptor for the enzyme is believed to be ubiquinone. This Metridium senile (Brown sea anemone) protein is NADH-ubiquinone oxidoreductase chain 4 (ND4).